The primary structure comprises 162 residues: COP9 signalosome complex subunit 9 (162 aa).

The region spanning 6–118 (ETIKSLEDPY…SVSKSMKFSR (113 aa)) is the PCI domain.

Component of a COP9 signalosome-like (CSN) complex, composed of at least RRI1/CSN5, CSN9, RRI2/CSN10, PCI8/CSN11, CSN12 and CSI1. In the complex, it probably interacts directly with CSN12 and CSI1. Also interacts with RPN5.

Its subcellular location is the cytoplasm. It localises to the nucleus. Functionally, component of the COP9 signalosome (CSN) complex that acts as a regulator of the ubiquitin (Ubl) conjugation pathway by mediating the deneddylation of the cullin subunit of SCF-type E3 ubiquitin-protein ligase complexes. The CSN complex is involved in the regulation of the mating pheromone response. The sequence is that of COP9 signalosome complex subunit 9 (CSN9) from Saccharomyces cerevisiae (strain ATCC 204508 / S288c) (Baker's yeast).